A 388-amino-acid chain; its full sequence is uncharacterized protein (388 aa).

Residues 68 to 96 (KVDRMSEEEERMAIATRKAKEVAKELSET) adopt a coiled-coil conformation. The tract at residues 162-388 (GSHPLVREFN…PPQQDWFDSV (227 aa)) is disordered. 2 stretches are compositionally biased toward basic and acidic residues: residues 166-176 (LVREFNGEKPP) and 196-208 (ATDK…QSDK). Basic residues predominate over residues 233–251 (GVKHQHAIRRDDRHRHGMR). Composition is skewed to low complexity over residues 265–279 (QQQQ…SRGQ) and 293–346 (QRRP…QRPA).

This is an uncharacterized protein from Frog virus 3 (isolate Goorha) (FV-3).